A 459-amino-acid chain; its full sequence is FBD-associated F-box protein At5g27750 (459 aa).

Residues 4–50 form the F-box domain; it reads FDRISELPESLITQILLCLPTKDSVKTSVLSTRWKNLWLNVPGLDLT. In terms of domain architecture, FBD spans 374 to 426; it reads TEELNLINVPRCIVSTLECVEIKGLFEWEEEEMKIARYFLENAAVLKKLTMSF.

The protein is FBD-associated F-box protein At5g27750 of Arabidopsis thaliana (Mouse-ear cress).